Reading from the N-terminus, the 280-residue chain is Formamidopyrimidine-DNA glycosylase (280 aa).

The Schiff-base intermediate with DNA role is filled by proline 2. The active-site Proton donor is glutamate 3. Residue lysine 58 is the Proton donor; for beta-elimination activity of the active site. 3 residues coordinate DNA: histidine 91, arginine 110, and arginine 152. The segment at 237 to 271 (NVYGRENLPCPQCDSAIEKVVLNQRAAYFCSNCQK) adopts an FPG-type zinc-finger fold. Arginine 261 (proton donor; for delta-elimination activity) is an active-site residue.

This sequence belongs to the FPG family. As to quaternary structure, monomer. Zn(2+) is required as a cofactor.

It catalyses the reaction Hydrolysis of DNA containing ring-opened 7-methylguanine residues, releasing 2,6-diamino-4-hydroxy-5-(N-methyl)formamidopyrimidine.. The catalysed reaction is 2'-deoxyribonucleotide-(2'-deoxyribose 5'-phosphate)-2'-deoxyribonucleotide-DNA = a 3'-end 2'-deoxyribonucleotide-(2,3-dehydro-2,3-deoxyribose 5'-phosphate)-DNA + a 5'-end 5'-phospho-2'-deoxyribonucleoside-DNA + H(+). Functionally, involved in base excision repair of DNA damaged by oxidation or by mutagenic agents. Acts as a DNA glycosylase that recognizes and removes damaged bases. Has a preference for oxidized purines, such as 7,8-dihydro-8-oxoguanine (8-oxoG). Has AP (apurinic/apyrimidinic) lyase activity and introduces nicks in the DNA strand. Cleaves the DNA backbone by beta-delta elimination to generate a single-strand break at the site of the removed base with both 3'- and 5'-phosphates. This is Formamidopyrimidine-DNA glycosylase from Hydrogenovibrio crunogenus (strain DSM 25203 / XCL-2) (Thiomicrospira crunogena).